The sequence spans 312 residues: Malate dehydrogenase (312 aa).

NAD(+) contacts are provided by residues 7–13 and aspartate 34; that span reads GAAGGIG. Residues arginine 81 and arginine 87 each contribute to the substrate site. Residues asparagine 94 and 117-119 contribute to the NAD(+) site; that span reads ITN. Positions 119 and 153 each coordinate substrate. Histidine 177 (proton acceptor) is an active-site residue. Methionine 227 lines the NAD(+) pocket.

The protein belongs to the LDH/MDH superfamily. MDH type 1 family. Homodimer.

It carries out the reaction (S)-malate + NAD(+) = oxaloacetate + NADH + H(+). In terms of biological role, catalyzes the reversible oxidation of malate to oxaloacetate. This is Malate dehydrogenase from Escherichia coli O139:H28 (strain E24377A / ETEC).